The primary structure comprises 490 residues: MKLLHPAFQSCLLLTLLGLWRTTPEAHASSPGAPAISAASFLQDLIHRYGEGDSLTLQQLKALLNHLDVGVGRGNVTQHVQGHRNLSTCFSSGDLFAAHNFSEQSRIGSSELQEFCPTILQQLDSRACTSENQENEENEQTEEGWPSAVEVWGYGLLCVTVISLCSLLGASVVPFMKKTFYKRLLLYFIALAIGTLYSNALFQLIPEAFGFNPLEDYYVSKSAVVFGGFYLFFFTEKILKILLKQKNEHHHGHSHYASETLPSKKDQEEGVMEKLQNGDLDHMIPQHCNSELDGKAPVVDEKVIVGSLSVQDLQASQSACYWLKGVRYSDIGTLAWMITLSDGLHNFIDGLAIGASFTVSVFQGISTSVAILCEEFPHELGDFVILLNAGMSIQQALFFNFLSACCCYLGLAFGILAGSHFSANWIFALAGGMFLYISLADMFPEMNEVCQEDERKGSILIPFVIQNLGLLTGFTIMVVLTMYSGQIQIG.

The first 28 residues, 1-28 (MKLLHPAFQSCLLLTLLGLWRTTPEAHA), serve as a signal peptide directing secretion. The Extracellular portion of the chain corresponds to 29–155 (SSPGAPAISA…PSAVEVWGYG (127 aa)). N75, N85, and N100 each carry an N-linked (GlcNAc...) asparagine glycan. The helical transmembrane segment at 156–176 (LLCVTVISLCSLLGASVVPFM) threads the bilayer. The Cytoplasmic segment spans residues 177 to 184 (KKTFYKRL). A helical transmembrane segment spans residues 185-205 (LLYFIALAIGTLYSNALFQLI). Residues 206-222 (PEAFGFNPLEDYYVSKS) are Extracellular-facing. A helical transmembrane segment spans residues 223–243 (AVVFGGFYLFFFTEKILKILL). The Cytoplasmic portion of the chain corresponds to 244-395 (KQKNEHHHGH…LLNAGMSIQQ (152 aa)). Residues 249-256 (HHHGHSHY) carry the HHHGHXHX-motif motif. Positions 374–379 (EEFPHE) match the XEXPHE-motif motif. The chain crosses the membrane as a helical span at residues 396 to 416 (ALFFNFLSACCCYLGLAFGIL). Topologically, residues 417-422 (AGSHFS) are extracellular. Residues 423–443 (ANWIFALAGGMFLYISLADMF) form a helical membrane-spanning segment. At 444-458 (PEMNEVCQEDERKGS) the chain is on the cytoplasmic side. Residues 459-479 (ILIPFVIQNLGLLTGFTIMVV) form a helical membrane-spanning segment. Topologically, residues 480-490 (LTMYSGQIQIG) are extracellular.

It belongs to the ZIP transporter (TC 2.A.5) family. In terms of assembly, homotrimer. Ubiquitinated. Ubiquitination occurs upon iron depletion. The ubiquitinated form undergoes proteasomal degradation. In terms of processing, N-glycosylated. N-glycosylation at Asn-100 is required for iron-regulated extraction of the transporter from membranes and subsequent proteasomal degradation.

The protein resides in the cell membrane. It is found in the apical cell membrane. It localises to the basolateral cell membrane. Its subcellular location is the early endosome membrane. The protein localises to the late endosome membrane. The protein resides in the lysosome membrane. It catalyses the reaction Zn(2+)(out) + 2 hydrogencarbonate(out) = Zn(2+)(in) + 2 hydrogencarbonate(in). The enzyme catalyses Mn(2+)(out) + 2 hydrogencarbonate(out) = Mn(2+)(in) + 2 hydrogencarbonate(in). The catalysed reaction is Fe(2+)(out) + 2 hydrogencarbonate(out) = Fe(2+)(in) + 2 hydrogencarbonate(in). It carries out the reaction Cd(2+)(out) + 2 hydrogencarbonate(out) = Cd(2+)(in) + 2 hydrogencarbonate(in). Electroneutral transporter of the plasma membrane mediating the cellular uptake of the divalent metal cations zinc, manganese and iron that are important for tissue homeostasis, metabolism, development and immunity. Functions as an energy-dependent symporter, transporting through the membranes an electroneutral complex composed of a divalent metal cation and two bicarbonate anions. Beside these endogenous cellular substrates, can also import cadmium a non-essential metal which is cytotoxic and carcinogenic. Controls the cellular uptake by the intestinal epithelium of systemic zinc, which is in turn required to maintain tight junctions and the intestinal permeability. Modifies the activity of zinc-dependent phosphodiesterases, thereby indirectly regulating G protein-coupled receptor signaling pathways important for gluconeogenesis and chondrocyte differentiation. Regulates insulin receptor signaling, glucose uptake, glycogen synthesis and gluconeogenesis in hepatocytes through the zinc-dependent intracellular catabolism of insulin. Through zinc cellular uptake also plays a role in the adaptation of cells to endoplasmic reticulum stress. Major manganese transporter of the basolateral membrane of intestinal epithelial cells, it plays a central role in manganese systemic homeostasis through intestinal manganese uptake. Also involved in manganese extracellular uptake by cells of the blood-brain barrier. May also play a role in manganese and zinc homeostasis participating in their elimination from the blood through the hepatobiliary excretion. Also functions in the extracellular uptake of free iron. May also function intracellularly and mediate the transport from endosomes to cytosol of iron endocytosed by transferrin. Plays a role in innate immunity by regulating the expression of cytokines by activated macrophages. This chain is Metal cation symporter ZIP14, found in Pongo abelii (Sumatran orangutan).